Consider the following 1380-residue polypeptide: DNA-directed RNA polymerase subunit beta (1380 aa).

This sequence belongs to the RNA polymerase beta chain family. As to quaternary structure, the RNAP catalytic core consists of 2 alpha, 1 beta, 1 beta' and 1 omega subunit. When a sigma factor is associated with the core the holoenzyme is formed, which can initiate transcription.

The enzyme catalyses RNA(n) + a ribonucleoside 5'-triphosphate = RNA(n+1) + diphosphate. Functionally, DNA-dependent RNA polymerase catalyzes the transcription of DNA into RNA using the four ribonucleoside triphosphates as substrates. The chain is DNA-directed RNA polymerase subunit beta from Ehrlichia canis (strain Jake).